The sequence spans 427 residues: UDP-N-acetyl-D-mannosamine dehydrogenase (427 aa).

NAD(+) is bound by residues Tyr19, Ile20, Asp39, Arg44, Thr91, and Thr130. UDP-N-acetyl-alpha-D-mannosaminouronate-binding residues include Arg155, Val156, Lys207, Asn211, Arg214, His245, Arg247, and Gly258. Lys207 functions as the Proton donor/acceptor in the catalytic mechanism. The active-site Nucleophile is the Cys261. UDP-N-acetyl-alpha-D-mannosaminouronate is bound by residues Tyr318 and Lys319. Arg326 lines the NAD(+) pocket. Lys404 lines the UDP-N-acetyl-alpha-D-mannosaminouronate pocket.

This sequence belongs to the UDP-glucose/GDP-mannose dehydrogenase family. In terms of assembly, homotetramer; probably dimer of dimers.

It carries out the reaction UDP-N-acetyl-alpha-D-mannosamine + 2 NAD(+) + H2O = UDP-N-acetyl-alpha-D-mannosaminouronate + 2 NADH + 3 H(+). Functionally, catalyzes the four-electron oxidation of UDP-N-acetyl-D-mannosamine (UDP-ManNAc), reducing NAD(+) and releasing UDP-N-acetylmannosaminuronic acid (UDP-ManNAcA). Cannot use NADP instead of NAD. This is UDP-N-acetyl-D-mannosamine dehydrogenase (wecC) from Methanococcus maripaludis (strain DSM 14266 / JCM 13030 / NBRC 101832 / S2 / LL).